Here is a 247-residue protein sequence, read N- to C-terminus: 5'-nucleotidase SurE (247 aa).

The a divalent metal cation site is built by D8, D9, S39, and N91.

This sequence belongs to the SurE nucleotidase family. The cofactor is a divalent metal cation.

The protein localises to the cytoplasm. It catalyses the reaction a ribonucleoside 5'-phosphate + H2O = a ribonucleoside + phosphate. Nucleotidase that shows phosphatase activity on nucleoside 5'-monophosphates. This is 5'-nucleotidase SurE from Nitrosomonas eutropha (strain DSM 101675 / C91 / Nm57).